A 286-amino-acid polypeptide reads, in one-letter code: Putative WUSCHEL-related homeobox 2 (286 aa).

Disordered regions lie at residues Met1–Thr25 and Ser128–Thr152. Residues Gly23–Leu87 constitute a DNA-binding region (homeobox; WUS-type).

Belongs to the WUS homeobox family.

It is found in the nucleus. In terms of biological role, transcription factor which may be involved in developmental processes. In Oryza sativa subsp. indica (Rice), this protein is Putative WUSCHEL-related homeobox 2 (WOX2).